The chain runs to 192 residues: UPF0149 protein VP2588 (192 aa).

Belongs to the UPF0149 family.

The chain is UPF0149 protein VP2588 from Vibrio parahaemolyticus serotype O3:K6 (strain RIMD 2210633).